Reading from the N-terminus, the 582-residue chain is ATP-dependent lipid A-core flippase (582 aa).

5 helical membrane-spanning segments follow: residues L16–L36, I63–F83, I153–V173, P253–P273, and V275–M295. Residues I28 to R310 form the ABC transmembrane type-1 domain. The ABC transporter domain maps to I342–L578. An ATP-binding site is contributed by G376 to S383.

Belongs to the ABC transporter superfamily. Lipid exporter (TC 3.A.1.106) family. Homodimer.

It localises to the cell inner membrane. The enzyme catalyses ATP + H2O + lipid A-core oligosaccharideSide 1 = ADP + phosphate + lipid A-core oligosaccharideSide 2.. Functionally, involved in lipopolysaccharide (LPS) biosynthesis. Translocates lipid A-core from the inner to the outer leaflet of the inner membrane. Transmembrane domains (TMD) form a pore in the inner membrane and the ATP-binding domain (NBD) is responsible for energy generation. The chain is ATP-dependent lipid A-core flippase from Sodalis glossinidius (strain morsitans).